The chain runs to 105 residues: Nucleoid-associated protein SaurJH1_0513 (105 aa).

A disordered region spans residues 1-33 (MRGGGNMQQMMKQMQKMQKKMAQEQKKLKEERI). Over residues 7–16 (MQQMMKQMQK) the composition is skewed to low complexity. A compositionally biased stretch (basic and acidic residues) spans 21–33 (MAQEQKKLKEERI).

Belongs to the YbaB/EbfC family. In terms of assembly, homodimer.

It localises to the cytoplasm. It is found in the nucleoid. In terms of biological role, binds to DNA and alters its conformation. May be involved in regulation of gene expression, nucleoid organization and DNA protection. This is Nucleoid-associated protein SaurJH1_0513 from Staphylococcus aureus (strain JH1).